The following is a 141-amino-acid chain: Pancreatic progenitor cell differentiation and proliferation factor-like protein (141 aa).

Residues 72-141 (DQSACGGNGP…GAPKDTNSPQ (70 aa)) form a disordered region. Residues 95 to 105 (SLLQQEESQLL) are compositionally biased toward low complexity. The segment covering 112-122 (GTVNRFRNSQT) has biased composition (polar residues).

The protein belongs to the PPDPF family.

This chain is Pancreatic progenitor cell differentiation and proliferation factor-like protein, found in Bos taurus (Bovine).